Here is a 433-residue protein sequence, read N- to C-terminus: Xylose isomerase (433 aa).

Residues His-99 and Asp-102 contribute to the active site. Mg(2+)-binding residues include Glu-230, Glu-266, His-269, Asp-294, Asp-305, Asp-307, and Asp-337.

It belongs to the xylose isomerase family. In terms of assembly, homotetramer. The cofactor is Mg(2+).

It is found in the cytoplasm. The catalysed reaction is alpha-D-xylose = alpha-D-xylulofuranose. This is Xylose isomerase from Cereibacter sphaeroides (strain ATCC 17023 / DSM 158 / JCM 6121 / CCUG 31486 / LMG 2827 / NBRC 12203 / NCIMB 8253 / ATH 2.4.1.) (Rhodobacter sphaeroides).